Here is a 405-residue protein sequence, read N- to C-terminus: Argininosuccinate synthase (405 aa).

Residues 10–18 (AYSGGLDTS) and Ala37 contribute to the ATP site. Tyr88 and Ser93 together coordinate L-citrulline. Gly118 lines the ATP pocket. 3 residues coordinate L-aspartate: Thr120, Asn124, and Asp125. Residue Asn124 participates in L-citrulline binding. Residues Arg128, Ser179, Ser188, Glu264, and Tyr276 each coordinate L-citrulline.

The protein belongs to the argininosuccinate synthase family. Type 1 subfamily. In terms of assembly, homotetramer.

Its subcellular location is the cytoplasm. It carries out the reaction L-citrulline + L-aspartate + ATP = 2-(N(omega)-L-arginino)succinate + AMP + diphosphate + H(+). It participates in amino-acid biosynthesis; L-arginine biosynthesis; L-arginine from L-ornithine and carbamoyl phosphate: step 2/3. The sequence is that of Argininosuccinate synthase from Pseudomonas syringae pv. tomato (strain ATCC BAA-871 / DC3000).